We begin with the raw amino-acid sequence, 214 residues long: Outer-membrane lipoprotein LolB (214 aa).

The N-terminal stretch at 1 to 25 is a signal peptide; sequence MNNLKRLTKTIFSCFTLSALLLLAG. Cys-26 carries N-palmitoyl cysteine lipidation. Cys-26 carries S-diacylglycerol cysteine lipidation. The span at 143-160 shows a compositional bias: polar residues; that stretch reads QVIESDSQGKPKQLTNTQ. The segment at 143–163 is disordered; that stretch reads QVIESDSQGKPKQLTNTQTPP.

It belongs to the LolB family. Monomer.

It is found in the cell outer membrane. Its function is as follows. Plays a critical role in the incorporation of lipoproteins in the outer membrane after they are released by the LolA protein. In Shewanella baltica (strain OS223), this protein is Outer-membrane lipoprotein LolB.